The chain runs to 289 residues: Dehydrodolichyl diphosphate synthase 4 (289 aa).

A helical transmembrane segment spans residues 2-22 (LSMLWFLLSLLSLLLLPCLRP).

Belongs to the UPP synthase family. Mg(2+) serves as cofactor.

It localises to the endoplasmic reticulum membrane. The protein operates within protein modification; protein glycosylation. Its function is as follows. Catalyzes cis-prenyl chain elongation to produce the polyprenyl backbone of dolichol, a glycosyl carrier-lipid required for the biosynthesis of several classes of glycoprotein. The chain is Dehydrodolichyl diphosphate synthase 4 from Arabidopsis thaliana (Mouse-ear cress).